The primary structure comprises 475 residues: ATP synthase subunit beta (475 aa).

An ATP-binding site is contributed by 160 to 167 (GGAGVGKT).

It belongs to the ATPase alpha/beta chains family. As to quaternary structure, F-type ATPases have 2 components, CF(1) - the catalytic core - and CF(0) - the membrane proton channel. CF(1) has five subunits: alpha(3), beta(3), gamma(1), delta(1), epsilon(1). CF(0) has three main subunits: a(1), b(2) and c(9-12). The alpha and beta chains form an alternating ring which encloses part of the gamma chain. CF(1) is attached to CF(0) by a central stalk formed by the gamma and epsilon chains, while a peripheral stalk is formed by the delta and b chains.

It localises to the cell membrane. The enzyme catalyses ATP + H2O + 4 H(+)(in) = ADP + phosphate + 5 H(+)(out). Produces ATP from ADP in the presence of a proton gradient across the membrane. The catalytic sites are hosted primarily by the beta subunits. This is ATP synthase subunit beta from Mycolicibacterium vanbaalenii (strain DSM 7251 / JCM 13017 / BCRC 16820 / KCTC 9966 / NRRL B-24157 / PYR-1) (Mycobacterium vanbaalenii).